Consider the following 137-residue polypeptide: MRTLLIVAVLLVGVEGSVYELGKMILQETGKNAATSYGFYGCNCGVGRRGKPKDATDRCCFVHKCCYKKLTDCNSKTDRYSYSWKDKTIVCGDNNPCLQEMCECDKAVAICLRENLNTYNKKYKIHMKFFCKKPDAC.

Positions 1 to 16 (MRTLLIVAVLLVGVEG) are cleaved as a signal peptide. 7 disulfide bridges follow: Cys42–Cys131, Cys44–Cys60, Cys59–Cys111, Cys65–Cys137, Cys66–Cys104, Cys73–Cys97, and Cys91–Cys102. The segment at 121–133 (KKYKIHMKFFCKK) is important for membrane-damaging activities in eukaryotes and bacteria; heparin-binding.

Expressed by the venom gland.

The protein localises to the secreted. Snake venom phospholipase A2 homolog that lacks enzymatic activity. Is myotoxic. A model of myotoxic mechanism has been proposed: an apo Lys49-PLA2 is activated by the entrance of a hydrophobic molecule (e.g. fatty acid) at the hydrophobic channel of the protein leading to a reorientation of a monomer. This reorientation causes a transition between 'inactive' to 'active' states, causing alignment of C-terminal and membrane-docking sites (MDoS) side-by-side and putting the membrane-disruption sites (MDiS) in the same plane, exposed to solvent and in a symmetric position for both monomers. The MDoS region stabilizes the toxin on membrane by the interaction of charged residues with phospholipid head groups. Subsequently, the MDiS region destabilizes the membrane with penetration of hydrophobic residues. This insertion causes a disorganization of the membrane, allowing an uncontrolled influx of ions (i.e. calcium and sodium), and eventually triggering irreversible intracellular alterations and cell death. The sequence is that of Basic phospholipase A2 homolog Pgo-K49 from Cerrophidion godmani (Porthidium godmani).